A 249-amino-acid polypeptide reads, in one-letter code: 2,3-bisphosphoglycerate-dependent phosphoglycerate mutase (249 aa).

Substrate-binding positions include 9–16 (RHGQSQWN), 22–23 (TG), arginine 61, 88–91 (ERHY), lysine 99, 115–116 (RR), and 184–185 (GN). The active-site Tele-phosphohistidine intermediate is histidine 10. Glutamate 88 functions as the Proton donor/acceptor in the catalytic mechanism.

It belongs to the phosphoglycerate mutase family. BPG-dependent PGAM subfamily. Homodimer.

It carries out the reaction (2R)-2-phosphoglycerate = (2R)-3-phosphoglycerate. It functions in the pathway carbohydrate degradation; glycolysis; pyruvate from D-glyceraldehyde 3-phosphate: step 3/5. In terms of biological role, catalyzes the interconversion of 2-phosphoglycerate and 3-phosphoglycerate. The sequence is that of 2,3-bisphosphoglycerate-dependent phosphoglycerate mutase from Xanthomonas campestris pv. campestris (strain B100).